The following is a 703-amino-acid chain: Prolyl 3-hydroxylase 2 (703 aa).

The signal sequence occupies residues M1–G21. Residues P18–Q40 are disordered. 4 TPR repeats span residues F42–L75, R144–H177, H205–E238, and P301–D334. 3 N-linked (GlcNAc...) asparagine glycosylation sites follow: N444, N455, and N544. Residues T552–L666 form the Fe2OG dioxygenase domain. Fe cation is bound by residues H575, D577, and H647. R657 is an active-site residue. Positions K700–L703 match the Prevents secretion from ER motif.

It belongs to the leprecan family. Fe cation is required as a cofactor. The cofactor is L-ascorbate. As to expression, detected at low levels in cartilage.

The protein localises to the endoplasmic reticulum. It localises to the sarcoplasmic reticulum. Its subcellular location is the golgi apparatus. The enzyme catalyses L-prolyl-[collagen] + 2-oxoglutarate + O2 = trans-3-hydroxy-L-prolyl-[collagen] + succinate + CO2. In terms of biological role, prolyl 3-hydroxylase that catalyzes the post-translational formation of 3-hydroxyproline on collagens. Contributes to proline 3-hydroxylation of collagen COL4A1 and COL1A1 in tendons, the eye sclera and in the eye lens capsule. Has high activity with the type IV collagen COL4A1, and lower activity with COL1A1. Catalyzes hydroxylation of the first Pro in Gly-Pro-Hyp sequences where Hyp is 4-hydroxyproline. Has no activity on substrates that lack 4-hydroxyproline in the third position. The protein is Prolyl 3-hydroxylase 2 of Rattus norvegicus (Rat).